Consider the following 490-residue polypeptide: ATP synthase subunit beta, chloroplastic (490 aa).

170 to 177 is a binding site for ATP; sequence GGAGVGKT.

Belongs to the ATPase alpha/beta chains family. F-type ATPases have 2 components, CF(1) - the catalytic core - and CF(0) - the membrane proton channel. CF(1) has five subunits: alpha(3), beta(3), gamma(1), delta(1), epsilon(1). CF(0) has four main subunits: a(1), b(1), b'(1) and c(9-12).

Its subcellular location is the plastid. The protein resides in the chloroplast thylakoid membrane. It catalyses the reaction ATP + H2O + 4 H(+)(in) = ADP + phosphate + 5 H(+)(out). Produces ATP from ADP in the presence of a proton gradient across the membrane. The catalytic sites are hosted primarily by the beta subunits. In Ipomoea obscura (Obscure morning glory), this protein is ATP synthase subunit beta, chloroplastic.